The sequence spans 235 residues: Sugar fermentation stimulation protein homolog (235 aa).

The protein belongs to the SfsA family.

In Pseudomonas aeruginosa (strain LESB58), this protein is Sugar fermentation stimulation protein homolog.